The sequence spans 196 residues: Probable GTP-binding protein EngB (196 aa).

Residues 24 to 196 enclose the EngB-type G domain; sequence ELSEVALSGR…IWNLIEPYIS (173 aa). GTP contacts are provided by residues 32–39, 59–63, 77–80, 144–147, and 176–178; these read GRSNVGKS, GKTQT, DVPG, TKED, and YSS. Residues S39 and T61 each contribute to the Mg(2+) site.

It belongs to the TRAFAC class TrmE-Era-EngA-EngB-Septin-like GTPase superfamily. EngB GTPase family. Mg(2+) is required as a cofactor.

In terms of biological role, necessary for normal cell division and for the maintenance of normal septation. The protein is Probable GTP-binding protein EngB of Staphylococcus aureus (strain MRSA252).